The primary structure comprises 425 residues: Inhibin beta A chain (425 aa).

The N-terminal stretch at 1–20 (MPLLWLRGFLLASCWIIVRS) is a signal peptide. The propeptide occupies 21-309 (SPTPGSEGHS…EDHPHRRRRR (289 aa)). Asparagine 165 carries N-linked (GlcNAc...) asparagine glycosylation. Positions 259–289 (KKKKKEEEGEGKKRDGEGGAGGDEEKEQSHR) are disordered. Positions 263-275 (KEEEGEGKKRDGE) are enriched in basic and acidic residues. 4 cysteine pairs are disulfide-bonded: cysteine 313-cysteine 321, cysteine 320-cysteine 390, cysteine 349-cysteine 422, and cysteine 353-cysteine 424.

It belongs to the TGF-beta family. In terms of assembly, dimeric, linked by one or more disulfide bonds. Inhibin A is a dimer of alpha/INHA and beta-A/INHBA. Activin A is a homodimer of beta-A/INHBA. Activin AB is a dimer of beta-A/INHBA and beta-B/INHBB. Interacts with FST and FSTL3; these interactions prevent activin A interaction to its type II receptor. Activin A interacts with ACVR2A. Activin A interacts with BMPR2. Inhibin A interacts with ACVR1; this interaction creates a non-signaling complex (NSC) that inhibits ACVR1-mediated BMP signaling. Inhibin A interacts with ACVR2A.

The protein resides in the secreted. In terms of biological role, inhibins/activins are involved in regulating a number of diverse functions such as hypothalamic and pituitary hormone secretion, gonadal hormone secretion, germ cell development and maturation, erythroid differentiation, insulin secretion, nerve cell survival, embryonic axial development or bone growth, depending on their subunit composition. Its function is as follows. Activin A is a homodimer of INHBA that plays a role in several essential biological processes including embryonic development, stem cell maintenance and differentiation, haematopoiesis, cell proliferation and tissue fibrosis. Signals through type I (such as ACVR1B or ACVR1C) and type II receptors (such as ACVR2A, ACVR2B or BMPR2) which, upon ligand binding, phosphorylate SMAD2 and SMAD3 intracellular signaling mediators that form a complex with SMAD4, translocate to the nucleus and modulate gene expression. Can also activate alternative non-canonical intracellular signaling pathways including the p38 MAPK, extracellular signal-regulated kinases 1/2 (ERK1/2) and c-Jun N-terminal kinases (JNKs) to modulate cell migration and differentiation. Alternatively, promotes osteoblastic differentiation via ACVRL1-SMAD1/5/9 pathway. In addition, can engage the type I receptor ACVR1 to form an ACVR1-activin A-type II receptor non-signaling complex (NSC) that renders receptors unavailable for engagement with BMPs, hence resulting in an apparent inhibition of ACVR1-mediated BMP signaling. Inhibin A is a dimer of alpha/INHA and beta-A/INHBA that functions as a feedback regulator in the hypothalamic-pituitary-gonadal (HPG) axis. Inhibits the secretion of FSH from the anterior pituitary gland by acting on pituitary gonadotrope cells. Antagonizes activin A by binding to the proteoglycan, betaglycan, and forming a stable complex with and, thereby, sequestering type II activin receptors while excluding type I receptor. This is Inhibin beta A chain (INHBA) from Bos taurus (Bovine).